The primary structure comprises 481 residues: Aspartyl/glutamyl-tRNA(Asn/Gln) amidotransferase subunit B (481 aa).

It belongs to the GatB/GatE family. GatB subfamily. As to quaternary structure, heterotrimer of A, B and C subunits.

The catalysed reaction is L-glutamyl-tRNA(Gln) + L-glutamine + ATP + H2O = L-glutaminyl-tRNA(Gln) + L-glutamate + ADP + phosphate + H(+). The enzyme catalyses L-aspartyl-tRNA(Asn) + L-glutamine + ATP + H2O = L-asparaginyl-tRNA(Asn) + L-glutamate + ADP + phosphate + 2 H(+). Functionally, allows the formation of correctly charged Asn-tRNA(Asn) or Gln-tRNA(Gln) through the transamidation of misacylated Asp-tRNA(Asn) or Glu-tRNA(Gln) in organisms which lack either or both of asparaginyl-tRNA or glutaminyl-tRNA synthetases. The reaction takes place in the presence of glutamine and ATP through an activated phospho-Asp-tRNA(Asn) or phospho-Glu-tRNA(Gln). The chain is Aspartyl/glutamyl-tRNA(Asn/Gln) amidotransferase subunit B from Pseudomonas putida (strain W619).